The sequence spans 108 residues: Trp operon repressor homolog (108 aa).

A DNA-binding region spans residues 59 to 82 (QRQISQLLGVGVATITRGSNELKS).

It belongs to the TrpR family. As to quaternary structure, homodimer.

It is found in the cytoplasm. Its function is as follows. This protein is an aporepressor. When complexed with L-tryptophan it binds the operator region of the trp operon and prevents the initiation of transcription. The polypeptide is Trp operon repressor homolog (Aliivibrio salmonicida (strain LFI1238) (Vibrio salmonicida (strain LFI1238))).